The chain runs to 264 residues: 3-methyl-2-oxobutanoate hydroxymethyltransferase (264 aa).

Mg(2+)-binding residues include Asp-45 and Asp-84. Residues 45–46 (DS), Asp-84, and Lys-112 contribute to the 3-methyl-2-oxobutanoate site. Mg(2+) is bound at residue Glu-114. The active-site Proton acceptor is Glu-181.

It belongs to the PanB family. Homodecamer; pentamer of dimers. Mg(2+) is required as a cofactor.

The protein resides in the cytoplasm. It catalyses the reaction 3-methyl-2-oxobutanoate + (6R)-5,10-methylene-5,6,7,8-tetrahydrofolate + H2O = 2-dehydropantoate + (6S)-5,6,7,8-tetrahydrofolate. It functions in the pathway cofactor biosynthesis; (R)-pantothenate biosynthesis; (R)-pantoate from 3-methyl-2-oxobutanoate: step 1/2. Functionally, catalyzes the reversible reaction in which hydroxymethyl group from 5,10-methylenetetrahydrofolate is transferred onto alpha-ketoisovalerate to form ketopantoate. This Escherichia coli O17:K52:H18 (strain UMN026 / ExPEC) protein is 3-methyl-2-oxobutanoate hydroxymethyltransferase.